Consider the following 365-residue polypeptide: Flagellar P-ring protein (365 aa).

Residues M1–A19 form the signal peptide.

Belongs to the FlgI family. As to quaternary structure, the basal body constitutes a major portion of the flagellar organelle and consists of four rings (L,P,S, and M) mounted on a central rod.

The protein localises to the periplasm. The protein resides in the bacterial flagellum basal body. Its function is as follows. Assembles around the rod to form the L-ring and probably protects the motor/basal body from shearing forces during rotation. The polypeptide is Flagellar P-ring protein (Shigella boydii serotype 4 (strain Sb227)).